The chain runs to 329 residues: Basic leucine zipper 61 (329 aa).

Disordered stretches follow at residues 1–22 (MAQL…FSSQ) and 98–204 (DDVH…HDPK). Positions 10 to 22 (TMTTPNWPDFSSQ) are enriched in polar residues. Residues 119–133 (PTRSSSNTSTPSDHN) are compositionally biased toward low complexity. Residues 139–154 (DNNKEAPPSDHDHHMD) are compositionally biased toward basic and acidic residues. Positions 155–169 (NNVANQNNAAGNNYN) are enriched in low complexity. The region spanning 202-254 (DPKRVKRILANRQSAQRSRVRKLQYISELERSVTSLQTEVSVLSPRVAFLDHQ) is the bZIP domain. A basic motif region spans residues 204 to 223 (KRVKRILANRQSAQRSRVRK). The leucine-zipper stretch occupies residues 230–251 (LERSVTSLQTEVSVLSPRVAFL). The segment covering 304–313 (KMENNVSDQS) has biased composition (polar residues). The disordered stretch occupies residues 304-329 (KMENNVSDQSPADIKPSVEKEQLLNV). Basic and acidic residues predominate over residues 319-329 (PSVEKEQLLNV).

Forms heterodimers with BZIP18, BZIP43 and VIP1/BZIP51.

It is found in the nucleus. In terms of biological role, transcriptional activator. This Arabidopsis thaliana (Mouse-ear cress) protein is Basic leucine zipper 61.